We begin with the raw amino-acid sequence, 65 residues long: Photosystem II reaction center protein J (65 aa).

A helical membrane pass occupies residues 35 to 55 (LWLVATAGGTAVIFVLGIFFY).

It belongs to the PsbJ family. In terms of assembly, PSII is composed of 1 copy each of membrane proteins PsbA, PsbB, PsbC, PsbD, PsbE, PsbF, PsbH, PsbI, PsbJ, PsbK, PsbL, PsbM, PsbT, PsbX, PsbY, Psb30/Ycf12, peripheral proteins PsbO, CyanoQ (PsbQ), PsbU, PsbV and a large number of cofactors. It forms dimeric complexes.

The protein resides in the cellular thylakoid membrane. One of the components of the core complex of photosystem II (PSII). PSII is a light-driven water:plastoquinone oxidoreductase that uses light energy to abstract electrons from H(2)O, generating O(2) and a proton gradient subsequently used for ATP formation. It consists of a core antenna complex that captures photons, and an electron transfer chain that converts photonic excitation into a charge separation. The polypeptide is Photosystem II reaction center protein J (Prochlorococcus marinus (strain NATL2A)).